We begin with the raw amino-acid sequence, 316 residues long: ATP synthase gamma chain (316 aa).

The protein belongs to the ATPase gamma chain family. As to quaternary structure, F-type ATPases have 2 components, CF(1) - the catalytic core - and CF(0) - the membrane proton channel. CF(1) has five subunits: alpha(3), beta(3), gamma(1), delta(1), epsilon(1). CF(0) has three main subunits: a, b and c.

It is found in the cellular thylakoid membrane. Its function is as follows. Produces ATP from ADP in the presence of a proton gradient across the membrane. The gamma chain is believed to be important in regulating ATPase activity and the flow of protons through the CF(0) complex. In Prochlorococcus marinus (strain NATL1A), this protein is ATP synthase gamma chain.